The following is a 238-amino-acid chain: Large ribosomal subunit protein uL2 (238 aa).

A disordered region spans residues 198-238; sequence HPHGGGLHQSVSRPSTVSRNAPPGRKVGHIASRRTGRRGGA. The segment covering 206–216 has biased composition (polar residues); it reads QSVSRPSTVSR. Residues 223-238 show a composition bias toward basic residues; sequence KVGHIASRRTGRRGGA.

This sequence belongs to the universal ribosomal protein uL2 family. Part of the 50S ribosomal subunit. Forms a bridge to the 30S subunit in the 70S ribosome.

Its function is as follows. One of the primary rRNA binding proteins. Required for association of the 30S and 50S subunits to form the 70S ribosome, for tRNA binding and peptide bond formation. It has been suggested to have peptidyltransferase activity; this is somewhat controversial. Makes several contacts with the 16S rRNA in the 70S ribosome. The polypeptide is Large ribosomal subunit protein uL2 (Sulfolobus acidocaldarius (strain ATCC 33909 / DSM 639 / JCM 8929 / NBRC 15157 / NCIMB 11770)).